The primary structure comprises 318 residues: Ribonuclease Z (318 aa).

Zn(2+) contacts are provided by His62, His64, Asp66, His67, His144, Asp215, and His273. The active-site Proton acceptor is the Asp66.

Belongs to the RNase Z family. Homodimer. Zn(2+) is required as a cofactor.

The catalysed reaction is Endonucleolytic cleavage of RNA, removing extra 3' nucleotides from tRNA precursor, generating 3' termini of tRNAs. A 3'-hydroxy group is left at the tRNA terminus and a 5'-phosphoryl group is left at the trailer molecule.. In terms of biological role, zinc phosphodiesterase, which displays some tRNA 3'-processing endonuclease activity. Probably involved in tRNA maturation, by removing a 3'-trailer from precursor tRNA. The protein is Ribonuclease Z of Prochlorococcus marinus (strain MIT 9313).